We begin with the raw amino-acid sequence, 20 residues long: L-amino-acid oxidase L1 (20 aa).

It belongs to the flavin monoamine oxidase family. FIG1 subfamily. As to quaternary structure, monomer. This is in contrast with most of its orthologs, that are non-covalently linked homodimers. FAD is required as a cofactor. N-glycosylated. In terms of tissue distribution, expressed by the venom gland.

The protein localises to the secreted. The catalysed reaction is an L-alpha-amino acid + O2 + H2O = a 2-oxocarboxylate + H2O2 + NH4(+). It carries out the reaction L-leucine + O2 + H2O = 4-methyl-2-oxopentanoate + H2O2 + NH4(+). The enzyme catalyses L-phenylalanine + O2 + H2O = 3-phenylpyruvate + H2O2 + NH4(+). It catalyses the reaction L-tryptophan + O2 + H2O = indole-3-pyruvate + H2O2 + NH4(+). The catalysed reaction is L-methionine + O2 + H2O = 4-methylsulfanyl-2-oxobutanoate + H2O2 + NH4(+). It carries out the reaction L-isoleucine + O2 + H2O = (S)-3-methyl-2-oxopentanoate + H2O2 + NH4(+). The enzyme catalyses L-tyrosine + O2 + H2O = 3-(4-hydroxyphenyl)pyruvate + H2O2 + NH4(+). Catalyzes an oxidative deamination of predominantly hydrophobic and aromatic L-amino acids, thus producing hydrogen peroxide that may contribute to the diverse toxic effects of this enzyme. Is active on L-Met, L-Ile, L-Leu, L-Phe, L-Trp, and L-Tyr. Exhibits diverse biological activities, such as hemorrhage, hemolysis, edema, apoptosis of vascular endothelial cells or tumor cell lines, antibacterial and antiparasitic activities, as well as regulation of platelet aggregation. Its effect on platelets is controversial, since it either induces aggregation or inhibits agonist-induced aggregation. These different effects are probably due to different experimental conditions. In Daboia russelii (Russel's viper), this protein is L-amino-acid oxidase L1.